We begin with the raw amino-acid sequence, 301 residues long: Putative two-component membrane permease complex subunit SMU_747c (301 aa).

A run of 8 helical transmembrane segments spans residues 15-35 (LAIF…GAIL), 60-80 (ILFG…IVPI), 97-117 (FLAT…SAFG), 124-144 (FLRL…LGFI), 188-208 (YLIF…TRIL), 211-231 (IGHN…ILSL), 238-258 (FIGT…FLLI), and 278-298 (FILQ…LIVG).

The protein belongs to the UPF0718 family. As to quaternary structure, interacts with SMU_746c.

The protein localises to the cell membrane. Its function is as follows. Could be part of a two-component membrane permease system responsible for amino acid transport under low pH. Involved in acidogenesis, biofilm formation and low-pH survival. The polypeptide is Putative two-component membrane permease complex subunit SMU_747c (Streptococcus mutans serotype c (strain ATCC 700610 / UA159)).